Consider the following 200-residue polypeptide: Recombination protein RecR (200 aa).

The C4-type zinc-finger motif lies at 59 to 74 (CSTCGNIDSQNPCTVC). Positions 82–177 (SIIVVVADVA…KVTRLAHGVP (96 aa)) constitute a Toprim domain.

Belongs to the RecR family.

In terms of biological role, may play a role in DNA repair. It seems to be involved in an RecBC-independent recombinational process of DNA repair. It may act with RecF and RecO. This is Recombination protein RecR from Rhodopseudomonas palustris (strain ATCC BAA-98 / CGA009).